The following is a 316-amino-acid chain: Conjugated bile acid hydrolase (316 aa).

The Nucleophile role is filled by Cys-2. Residues Cys-2 and Arg-18 each contribute to the deoxycholate site. Residue Asn-81 participates in taurine binding.

Belongs to the peptidase C59 family.

It catalyses the reaction cholate + taurine = taurocholate + H2O. It carries out the reaction taurochenodeoxycholate + H2O = chenodeoxycholate + taurine. The catalysed reaction is taurodeoxycholate + H2O = deoxycholate + taurine. The enzyme catalyses glycocholate + H2O = cholate + glycine. It catalyses the reaction glycodeoxycholate + H2O = deoxycholate + glycine. It participates in lipid metabolism; bile acid biosynthesis. In terms of biological role, bile salt hydrolase that catalyzes the deconjugation of glycine- and taurine-linked bile salts, which occurs naturally in the intestines of humans, releasing amino acid residues and deconjugated bile salts (bile acids). Can hydrolyze the amide bond in the bile salts taurocholate (TCA), taurodeoxycholate (TDCA), taurochenodeoxycholate (TCDCA), glycocholate (GCA) and glycodeoxycholate (GDCA). Shows highest activity toward the taurine-conjugated bile salts TCA and TCDCA. The activity toward the other three substrates (TDCA, GCA and GDCA) is relatively low. This enzyme likely contributes to bile salt resistance of the strain and may be associated with survival capability of strain JCM1131 within the human intestine by bile detoxification. In Lactobacillus gasseri (strain ATCC 33323 / DSM 20243 / BCRC 14619 / CIP 102991 / JCM 1131 / KCTC 3163 / NCIMB 11718 / NCTC 13722 / AM63), this protein is Conjugated bile acid hydrolase.